Reading from the N-terminus, the 124-residue chain is Small ribosomal subunit protein bS6 (124 aa).

The tract at residues 96 to 124 is disordered; sequence ETAPSPMMKEVQREEARKAAQTTTEGQPA. The segment covering 115-124 has biased composition (polar residues); the sequence is AQTTTEGQPA.

It belongs to the bacterial ribosomal protein bS6 family.

In terms of biological role, binds together with bS18 to 16S ribosomal RNA. In Cupriavidus metallidurans (strain ATCC 43123 / DSM 2839 / NBRC 102507 / CH34) (Ralstonia metallidurans), this protein is Small ribosomal subunit protein bS6.